We begin with the raw amino-acid sequence, 254 residues long: Alcohol dehydrogenase 2 (254 aa).

10–33 (FVAGLGGIGLDTSREIVKSGPKNL) contributes to the NAD(+) binding site. S138 contributes to the substrate binding site. Y151 serves as the catalytic Proton acceptor.

Belongs to the short-chain dehydrogenases/reductases (SDR) family. As to quaternary structure, homodimer.

The enzyme catalyses a primary alcohol + NAD(+) = an aldehyde + NADH + H(+). It carries out the reaction a secondary alcohol + NAD(+) = a ketone + NADH + H(+). This Drosophila hydei (Fruit fly) protein is Alcohol dehydrogenase 2 (Adh2).